The sequence spans 296 residues: Stanniocalcin-2 (296 aa).

The signal sequence occupies residues Met1–Gly24. Residues Pro21 to Arg44 form a disordered region. Over residues Gly24–Arg44 the composition is skewed to polar residues. Asn73 carries an N-linked (GlcNAc...) asparagine glycan. Positions Pro218–Arg296 are disordered. Positions Arg240 to Ser258 are enriched in basic and acidic residues. Over residues Gly272–Ser282 the composition is skewed to low complexity.

This sequence belongs to the stanniocalcin family. In terms of assembly, homodimer; disulfide-linked. In terms of tissue distribution, found in a variety of tissues including skeletal muscle, small intestine, kidney, liver and brain.

The protein localises to the secreted. In terms of biological role, has an anti-hypocalcemic action on calcium and phosphate homeostasis. This Mus musculus (Mouse) protein is Stanniocalcin-2 (Stc2).